Consider the following 247-residue polypeptide: Small ribosomal subunit protein eS6 (247 aa).

The tract at residues 194-247 is disordered; the sequence is ALKKKRVTKKREDHAEYTKLLAQRMKEAKERKMERKRSNSRSKGDSIRESTSKK. Over residues 217-247 the composition is skewed to basic and acidic residues; the sequence is RMKEAKERKMERKRSNSRSKGDSIRESTSKK.

This sequence belongs to the eukaryotic ribosomal protein eS6 family. Post-translationally, ribosomal protein S6 is the major substrate of protein kinases in eukaryote ribosomes.

Functionally, component of the 40S small ribosomal subunit. Plays an important role in controlling cell growth and proliferation through the selective translation of particular classes of mRNA. The protein is Small ribosomal subunit protein eS6 (RPS6) of Aplysia californica (California sea hare).